The following is a 556-amino-acid chain: DNA ligase B (556 aa).

The N6-AMP-lysine intermediate role is filled by K124.

Belongs to the NAD-dependent DNA ligase family. LigB subfamily.

The catalysed reaction is NAD(+) + (deoxyribonucleotide)n-3'-hydroxyl + 5'-phospho-(deoxyribonucleotide)m = (deoxyribonucleotide)n+m + AMP + beta-nicotinamide D-nucleotide.. Functionally, catalyzes the formation of phosphodiester linkages between 5'-phosphoryl and 3'-hydroxyl groups in double-stranded DNA using NAD as a coenzyme and as the energy source for the reaction. The chain is DNA ligase B from Pseudomonas fluorescens (strain ATCC BAA-477 / NRRL B-23932 / Pf-5).